Consider the following 151-residue polypeptide: 6,7-dimethyl-8-ribityllumazine synthase (151 aa).

5-amino-6-(D-ribitylamino)uracil-binding positions include F23, A55–E57, and A79–I81. (2S)-2-hydroxy-3-oxobutyl phosphate is bound at residue A84–T85. H87 serves as the catalytic Proton donor. F111 provides a ligand contact to 5-amino-6-(D-ribitylamino)uracil. Residue R125 coordinates (2S)-2-hydroxy-3-oxobutyl phosphate.

Belongs to the DMRL synthase family.

It catalyses the reaction (2S)-2-hydroxy-3-oxobutyl phosphate + 5-amino-6-(D-ribitylamino)uracil = 6,7-dimethyl-8-(1-D-ribityl)lumazine + phosphate + 2 H2O + H(+). It participates in cofactor biosynthesis; riboflavin biosynthesis; riboflavin from 2-hydroxy-3-oxobutyl phosphate and 5-amino-6-(D-ribitylamino)uracil: step 1/2. Catalyzes the formation of 6,7-dimethyl-8-ribityllumazine by condensation of 5-amino-6-(D-ribitylamino)uracil with 3,4-dihydroxy-2-butanone 4-phosphate. This is the penultimate step in the biosynthesis of riboflavin. In Leptospira interrogans serogroup Icterohaemorrhagiae serovar copenhageni (strain Fiocruz L1-130), this protein is 6,7-dimethyl-8-ribityllumazine synthase.